The following is a 481-amino-acid chain: Lincomycin resistance protein (481 aa).

Helical transmembrane passes span 30-50, 67-87, 99-119, 127-147, 162-182, 185-205, 215-235, 245-265, 285-305, 318-338, 340-360, 374-394, 421-441, and 446-466; these read WVTLVFLAVLQLLIAVDVTVV, QLTWVVTGYTVVGGGLLMVGG, LLFGAFLFGASSLAAGLAPNL, FGQGAGEALSLPAAMSLIACS, VASVGLVLGFLLSGVITQLFS, WIFLINIPLVSLVLVAVLLLV, PVDLPGALLFTAAPLLLIFGV, LPLAVGSLLAAAVCAAAFVAV, LVANGATVLLSAALSTSFFLL, IEAGLSFLPLGLSLILACVLV, GLIERIGTTGAAVLGMALAGP, LLTSVFPGMILLLRMATGLVA, LGGASGIAVYVSIGFSPHLGG, and FTVAYSLAGIGLIAAVLAVLA.

This sequence belongs to the major facilitator superfamily. TCR/Tet family.

The protein resides in the cell membrane. In terms of biological role, proton-dependent transporter. May mediate the efflux of lincomycin. This Streptomyces lincolnensis protein is Lincomycin resistance protein (lmrA).